The primary structure comprises 101 residues: Large ribosomal subunit protein uL24 (101 aa).

Belongs to the universal ribosomal protein uL24 family. Part of the 50S ribosomal subunit.

Its function is as follows. One of two assembly initiator proteins, it binds directly to the 5'-end of the 23S rRNA, where it nucleates assembly of the 50S subunit. Functionally, one of the proteins that surrounds the polypeptide exit tunnel on the outside of the subunit. In Borrelia garinii subsp. bavariensis (strain ATCC BAA-2496 / DSM 23469 / PBi) (Borreliella bavariensis), this protein is Large ribosomal subunit protein uL24.